A 200-amino-acid polypeptide reads, in one-letter code: Recombination protein RecR (200 aa).

Residues 59–74 form a C4-type zinc finger; it reads CSTCGNIDSQNPCTVC. The 96-residue stretch at 82 to 177 folds into the Toprim domain; it reads SIIVVVADVA…KVTRLAHGVP (96 aa).

It belongs to the RecR family.

In terms of biological role, may play a role in DNA repair. It seems to be involved in an RecBC-independent recombinational process of DNA repair. It may act with RecF and RecO. The sequence is that of Recombination protein RecR from Rhodopseudomonas palustris (strain ATCC BAA-98 / CGA009).